Here is a 188-residue protein sequence, read N- to C-terminus: UPF0301 protein Smal_0940 (188 aa).

It belongs to the UPF0301 (AlgH) family.

This Stenotrophomonas maltophilia (strain R551-3) protein is UPF0301 protein Smal_0940.